A 612-amino-acid chain; its full sequence is Transcription factor unc-37 (612 aa).

The interval 143-228 (FASPHVNGGD…SNSRARQQQQ (86 aa)) is disordered. Residues 150–159 (GGDGAGGSSG) are compositionally biased toward gly residues. The segment at 153 to 196 (GAGGSSGGASEAKKAKLEDPDDGELEIDVTNDDHPSTASNGGAA) is CCN domain. The segment covering 171–182 (DPDDGELEIDVT) has biased composition (acidic residues). The span at 202-221 (DSTNSVASSGASTPSIASNS) shows a compositional bias: polar residues. WD repeat units lie at residues 308–339 (GIPT…RVYT), 372–402 (LKEN…ALWD), 414–444 (TDSQ…LIYD), 456–486 (GHQD…RCWD), 538–568 (QHES…NAWR), and 579–609 (KENS…TLYA).

Belongs to the WD repeat Groucho/TLE family. As to quaternary structure, interacts with unc-4. Interacts with ref-1. May interact with mls-1.

It localises to the nucleus. In terms of biological role, transcriptional corepressor that functions with the neural specificity gene unc-4 to govern motor neuron identity. In concert with unc-4, represses the expression of VB-specific genes such as ceh-12, thereby preventing the adoption of VB motor neuron fate. May function with transcription factor mls-1 to promote uterine muscle specification and formation. The sequence is that of Transcription factor unc-37 (unc-37) from Caenorhabditis elegans.